The chain runs to 267 residues: 2-keto-3-deoxy-L-rhamnonate aldolase (267 aa).

His49 acts as the Proton acceptor in catalysis. Residue Gln151 participates in substrate binding. Mg(2+) is bound at residue Glu153. Ala178 and Asp179 together coordinate substrate. Asp179 is a binding site for Mg(2+).

It belongs to the HpcH/HpaI aldolase family. KDR aldolase subfamily. Homohexamer. Mg(2+) serves as cofactor.

It carries out the reaction 2-dehydro-3-deoxy-L-rhamnonate = (S)-lactaldehyde + pyruvate. Functionally, catalyzes the reversible retro-aldol cleavage of 2-keto-3-deoxy-L-rhamnonate (KDR) to pyruvate and lactaldehyde. The polypeptide is 2-keto-3-deoxy-L-rhamnonate aldolase (Salmonella paratyphi A (strain ATCC 9150 / SARB42)).